We begin with the raw amino-acid sequence, 132 residues long: Small ribosomal subunit protein uS11 (132 aa).

The protein belongs to the universal ribosomal protein uS11 family. Part of the 30S ribosomal subunit. Interacts with proteins S7 and S18. Binds to IF-3.

Located on the platform of the 30S subunit, it bridges several disparate RNA helices of the 16S rRNA. Forms part of the Shine-Dalgarno cleft in the 70S ribosome. The sequence is that of Small ribosomal subunit protein uS11 from Legionella pneumophila (strain Paris).